Here is a 271-residue protein sequence, read N- to C-terminus: MVLLKEYRVILPVSVDEYQVGQLYSVAEASKNETGGGEGVEVLVNEPYEKDDGEKGQYTHKIYHLQSKVPTFVRMLAPEGALNIHEKAWNAYPYCRTVITNEYMKEDFLIKIETWHKPDLGTQENVHKLEPEAWKHVEAIYIDIADRSQVLSKDYKAEEDPAKFKSVKTGRGPLGPNWKQELVNQKDCPYMCAYKLVTVKFKWWGLQNKVENFIHKQEKRLFTNFHRQLFCWLDKWVDLTMDDIRRMEEETKRQLDEMRQKDPVKGMTADD.

Residues threonine 59, lysine 61, glutamate 86, asparagine 90, threonine 97, and lysine 195 each coordinate a 1,2-diacyl-sn-glycero-3-phospho-(1D-myo-inositol). An N6-acetyllysine modification is found at lysine 216. Positions 251-264 are enriched in basic and acidic residues; sequence TKRQLDEMRQKDPV. Positions 251 to 271 are disordered; sequence TKRQLDEMRQKDPVKGMTADD.

It belongs to the PtdIns transfer protein family. PI transfer class I subfamily. Post-translationally, phosphorylated by PKC in a calcium and phosphatidylserine-dependent manner.

The protein resides in the cytoplasm. The protein localises to the nucleus. The catalysed reaction is a 1,2-diacyl-sn-glycero-3-phosphocholine(in) = a 1,2-diacyl-sn-glycero-3-phosphocholine(out). It catalyses the reaction a 1,2-diacyl-sn-glycero-3-phospho-(1D-myo-inositol)(in) = a 1,2-diacyl-sn-glycero-3-phospho-(1D-myo-inositol)(out). In terms of biological role, catalyzes the transfer of phosphatidylinositol (PI) and phosphatidylcholine (PC) between membranes. Shows a preference for PI and PC containing shorter saturated or monosaturated acyl chains at the sn-1 and sn-2 positions. Preference order for PC is C16:1 &gt; C16:0 &gt; C18:1 &gt; C18:0 &gt; C20:4 and for PI is C16:1 &gt; C16:0 &gt; C18:1 &gt; C18:0 &gt; C20:4 &gt; C20:3. The polypeptide is Phosphatidylinositol transfer protein alpha isoform (Pitpna) (Mus musculus (Mouse)).